Here is a 228-residue protein sequence, read N- to C-terminus: Casparian strip membrane protein 2 (228 aa).

The Cytoplasmic portion of the chain corresponds to 1-65 (MSTSDAAATV…FRRADRGSRC (65 aa)). The chain crosses the membrane as a helical span at residues 66 to 86 (VALLDLVLRVAAFGPALAAAI). The Extracellular portion of the chain corresponds to 87–113 (ATGTSDETLSVFTQFFQFHARFDDFPA). A helical transmembrane segment spans residues 114 to 134 (LLFFMVANAIAAGYLVLSLPF). Residues 135–149 (SAVVVLRPQAIGLRH) lie on the Cytoplasmic side of the membrane. The helical transmembrane segment at 150–170 (LLLICDLIIAALLTAAAAAAA) threads the bilayer. Residues 171 to 201 (AIVDLAHSGNQRANWVPICMQFHGFCQRTSG) lie on the Extracellular side of the membrane. A helical transmembrane segment spans residues 202–222 (AVVASFLAVLVLLFLVILAAF). Residues 223–228 (TIRKRC) lie on the Cytoplasmic side of the membrane.

It belongs to the Casparian strip membrane proteins (CASP) family. In terms of assembly, homodimer and heterodimers.

Its subcellular location is the cell membrane. Functionally, regulates membrane-cell wall junctions and localized cell wall deposition. Required for establishment of the Casparian strip membrane domain (CSD) and the subsequent formation of Casparian strips, a cell wall modification of the root endodermis that determines an apoplastic barrier between the intraorganismal apoplasm and the extraorganismal apoplasm and prevents lateral diffusion. The polypeptide is Casparian strip membrane protein 2 (Zea mays (Maize)).